The chain runs to 449 residues: Hyaluronidase-2 (449 aa).

The signal sequence occupies residues 1 to 23 (MYHLWIKCLAAWIFLKRCNGVHA). Disulfide bonds link C47-C340 and C211-C227. 3 N-linked (GlcNAc...) asparagine glycosylation sites follow: N67, N103, and N111. Residue E135 is the Proton donor of the active site. An N-linked (GlcNAc...) asparagine glycan is attached at N153. N357 is a glycosylation site (N-linked (GlcNAc...) asparagine). 3 cysteine pairs are disulfide-bonded: C365–C376, C370–C427, and C429–C438. N-linked (GlcNAc...) asparagine glycosylation occurs at N401. One can recognise an EGF-like domain in the interval 427–438 (CQCYQGWKGLYC).

It belongs to the glycosyl hydrolase 56 family. In terms of assembly, monomer. In terms of tissue distribution, expressed by the venom gland.

Its subcellular location is the secreted. The enzyme catalyses Random hydrolysis of (1-&gt;4)-linkages between N-acetyl-beta-D-glucosamine and D-glucuronate residues in hyaluronate.. In terms of biological role, snake venom endo-hyaluronidase that degrades hyaluronan to smaller oligosaccharide fragments. In venom, it is not toxic by itself, but increases the diffusion of other venom proteins by degrading the extracellular matrix. In addition, it displays antiedematogenic activity. This is Hyaluronidase-2 from Bitis arietans (African puff adder).